The primary structure comprises 449 residues: 23S rRNA (uracil(1939)-C(5))-methyltransferase RlmD (449 aa).

A TRAM domain is found at 15-73 (KAIPAKNLTVTVTSLDPFGQGVARHEGKTVFVTGVLPGEQAEVQLTEDKRQFSHAKLKR). [4Fe-4S] cluster is bound by residues Cys86, Cys92, Cys95, and Cys173. Residues Gln276, Phe305, Asn310, Glu326, Asn353, and Asp374 each coordinate S-adenosyl-L-methionine. The active-site Nucleophile is Cys400.

The protein belongs to the class I-like SAM-binding methyltransferase superfamily. RNA M5U methyltransferase family. RlmD subfamily.

The catalysed reaction is uridine(1939) in 23S rRNA + S-adenosyl-L-methionine = 5-methyluridine(1939) in 23S rRNA + S-adenosyl-L-homocysteine + H(+). Functionally, catalyzes the formation of 5-methyl-uridine at position 1939 (m5U1939) in 23S rRNA. The protein is 23S rRNA (uracil(1939)-C(5))-methyltransferase RlmD of Pectobacterium carotovorum subsp. carotovorum (strain PC1).